Here is a 145-residue protein sequence, read N- to C-terminus: Large ribosomal subunit protein uL13 (145 aa).

This sequence belongs to the universal ribosomal protein uL13 family. Part of the 50S ribosomal subunit.

This protein is one of the early assembly proteins of the 50S ribosomal subunit, although it is not seen to bind rRNA by itself. It is important during the early stages of 50S assembly. In Staphylococcus epidermidis (strain ATCC 35984 / DSM 28319 / BCRC 17069 / CCUG 31568 / BM 3577 / RP62A), this protein is Large ribosomal subunit protein uL13.